The primary structure comprises 231 residues: Small ribosomal subunit protein uS3 (231 aa).

A KH type-2 domain is found at 38–106 (IRVYLKNRLK…KTFVNIMEIK (69 aa)).

It belongs to the universal ribosomal protein uS3 family. As to quaternary structure, part of the 30S ribosomal subunit. Forms a tight complex with proteins S10 and S14.

Binds the lower part of the 30S subunit head. Binds mRNA in the 70S ribosome, positioning it for translation. In Endomicrobium trichonymphae, this protein is Small ribosomal subunit protein uS3.